The sequence spans 1675 residues: Clathrin heavy chain 1 (1675 aa).

A2 is subject to N-acetylalanine. Positions 2-479 (AQILPIRFQE…VDPTLALSVY (478 aa)) are globular terminal domain. 7 WD40-like repeat regions span residues 24-67 (NIGF…RPIS), 68-107 (ADSA…MTDD), 108-149 (VTFW…SSLA), 150-195 (GCQI…QPIE), 196-257 (GHAA…PEAQ), 258-301 (NDFP…ISGE), and 302-330 (TIFV…VCVE). S67 carries the phosphoserine modification. T105 carries the phosphothreonine modification. Y184 carries the phosphotyrosine modification. T394 is subject to Phosphothreonine. The binding site for the uncoating ATPase, involved in lattice disassembly stretch occupies residues 449–465 (EKWLKEDKLECSEELGD). Residues 480-523 (LRANVPNKVIQCFAETGQVQKIVLYAKKVGYTPDWIFLLRNVMR) form a flexible linker region. The tract at residues 524-634 (ISPDQGQQFA…RALEHFTDLY (111 aa)) is distal segment. Residues 524 to 1675 (ISPDQGQQFA…QPQPGFGYSM (1152 aa)) are heavy chain arm. 7 CHCR repeats span residues 537 to 683 (VQDE…QIWV), 686 to 828 (ASKY…SEDV), 833 to 972 (ILVV…PLID), 979 to 1124 (LSET…VKEA), 1128 to 1269 (YIKA…FRLA), 1274 to 1420 (LHIV…LLLN), and 1423 to 1566 (LMVL…RECF). At Y634 the chain carries Phosphotyrosine. The segment at 639–1675 (AVVHTHLLNP…QPQPGFGYSM (1037 aa)) is proximal segment. K737 is subject to N6-succinyllysine. At K856 the chain carries N6-acetyllysine. Y899 bears the Phosphotyrosine mark. S1167 carries the post-translational modification Phosphoserine. A Phosphotyrosine modification is found at Y1206. Residues 1213–1522 (AAKLLYNNVS…YLFKGNNRWK (310 aa)) form an involved in binding clathrin light chain region. Phosphoserine is present on S1229. An N6-acetyllysine; alternate modification is found at K1441. K1441 bears the N6-succinyllysine; alternate mark. Residues Y1477 and Y1487 each carry the phosphotyrosine modification. Residue S1494 is modified to Phosphoserine. At K1501 the chain carries N6-acetyllysine. Positions 1550 to 1675 (AEELLQWFLQ…QPQPGFGYSM (126 aa)) are trimerization.

This sequence belongs to the clathrin heavy chain family. In terms of assembly, clathrin triskelions, composed of 3 heavy chains and 3 light chains, are the basic subunits of the clathrin coat. In the presence of light chains, hub assembly is influenced by both the pH and the concentration of calcium. Interacts with HIP1. Interacts with DENND1A, DENND1B and DENND1C. Interacts with OCRL. Interacts with ERBB2. Interacts with FKBP6. Interacts with CKAP5 and TACC3 forming the TACC3/ch-TOG/clathrin complex located at spindle inter-microtubules bridges; the complex implicates clathrin triskelions; TACC3 and CLTC are proposed to form a composite microtubule interaction surface. Interacts with ATG16L1 (via N-terminus). Interacts with RFTN1; the interaction occurs in response to pathogens. Interacts with USP2 isoform 2. Interacts with TMEM106B (via N-terminus). Interacts with DNAJC6; this interaction produces a local change in heavy-chain contacts, creating a detectable global distortion of the clathrin coat and leads to the recruitment of HSPA8.

The protein localises to the cytoplasmic vesicle membrane. Its subcellular location is the membrane. The protein resides in the coated pit. It localises to the melanosome. It is found in the cytoplasm. The protein localises to the cytoskeleton. Its subcellular location is the spindle. Its function is as follows. Clathrin is the major protein of the polyhedral coat of coated pits and vesicles. Two different adapter protein complexes link the clathrin lattice either to the plasma membrane or to the trans-Golgi network. Acts as a component of the TACC3/ch-TOG/clathrin complex proposed to contribute to stabilization of kinetochore fibers of the mitotic spindle by acting as inter-microtubule bridge. The TACC3/ch-TOG/clathrin complex is required for the maintenance of kinetochore fiber tension. Plays a role in early autophagosome formation. Interaction with DNAJC6 mediates the recruitment of HSPA8 to the clathrin lattice and creates local destabilization of the lattice promoting uncoating. The protein is Clathrin heavy chain 1 of Rattus norvegicus (Rat).